Reading from the N-terminus, the 885-residue chain is MQERYQPNLVEAAAQQDWQARDAYLVHESAKNADGSEKPKFYACSMLPYPSGKLHMGHVRNYTINDMMARQLRMRGYNVLMPMGWDAFGMPAENAAIKSKVPPAKWTYDNIAYMKKQMKAMGLAIDWSREMCACDPAYYKWNQWLFLKMLEKGIAYRKTQVVNWDPVDQTVLANEQVIDGRGWRSGAPVEKREIPGYYLRITDYADELLDQVKNGLPGWPERVRVMQENWIGKSEGVRLAFPHDIKDENGQLIQDGKLFVFTTRADTVMGVTFCAVAPEHPLATLAARNNPALATFIEQCKLGGTTEAEIATREKEGIPTGLSVKHPLTGQAVDLWVGNYVLMSYGDGAVMGVPAHDERDFAFARKYGLTIRQVIAQEGKTYSDQAWQEWYGDKQTGRTINSGKYDGLSTAEAVDAIAADLNALGLGEKQTTYRLRDWGISRQRYWGTPIPIIHCQDCGPVPVPEQDLPVVLPDDLIPDGSGNPLAKNEAFLSCSCPACGKPARRETDTMDTFVDSSWYFMRYTSPGNDQAMVDKRNDYWMPMDQYIGGIEHAVLHLLYARFWTKVMRDLGMLKFDEPFTRLLCQGMVLNHIYSRRTPQGGIEYFWPEEVENIYDAKGAIVGARLKSDGSEITYGGVGTMSKSKNNGVDPQSLIDTLGADTARLFVMFASPPEQTLEWSDSGVDGANRFLRRLWALAYDRRAAVARGLASGYAWQDAPAPVKDLRRELYGLLKQAEYDYQRIQYNTVVSASMKMLNAIDNAQLPEGPAADAAIAEGLGLLLRVLYPVVPHVTWHIWRDLGYAAELGDLLDAPWPHVDEAALIADEIELMLQVNGKLRGAIRVAAQAAKEDIEKIAVAQEEVARFLEGRPPKRVIVVPGKLVNVVG.

The short motif at 48 to 58 (PYPSGKLHMGH) is the 'HIGH' region element. Residues 639–643 (TMSKS) carry the 'KMSKS' region motif. Lys-642 provides a ligand contact to ATP.

This sequence belongs to the class-I aminoacyl-tRNA synthetase family.

The protein resides in the cytoplasm. The enzyme catalyses tRNA(Leu) + L-leucine + ATP = L-leucyl-tRNA(Leu) + AMP + diphosphate. The chain is Leucine--tRNA ligase from Bordetella avium (strain 197N).